We begin with the raw amino-acid sequence, 694 residues long: MLCACSGEQFRFEDQPGSPESLATRDFSASGLSSRNGGGDWDSKLEDIQVDEAESTLKEALSLNYEEARALLGRLEYQRGNFDAALQVFKGIDIKVLTPRIIKAIVEKTLPCKPRSKAVIVPPTTMSMHSVSLLLEAILLKARSLEELGSYKEAAEECKIILDVVENALPSGMPDGISGFAKLQDIFQKALELLPLLWKKAGNHHETIASYRRALSRPWNLDPQRLAVTQKSLALVLLYGSVEACPKDNIEEAIVLLMLLVKKMVVGDIQWDPELMDHLTYALSMTGQFEVLANYLEQTLPGVYTRGERWYLLSLCYSAAGIDKAAINLLKMALGPSESRQIPHIPLLLFGAKLCSKDPKHSRDGINFAHRLLDLGNSQSEHLLSQAHKFLGVCYGNAARSSKLDSERVFLQKKSLFSLNEAAKRGKADPELDVIFNLSVENAVQRNVQAALDGAVEYSSMVGGVSTKGWKHLAIVLSAEKRLKDAESILDFTMEEAGDIEKIELLRLKAVLQMAQEQPKKAMKTCSSLLGLIRAQEKSEQSESLLQKFETEAWQDLASVYGKLGSWSDAETCLEKARSMCYYSPRGWNETGLCLEAKSLHEEALISFFLSLSIEPDHVPSIVSIAEVMMKSGDESLPTAKSFLMNALRLDPRNHDAWMKLGHVAKKQGLSQQAAEFYQAAYELELSAPVQSFI.

The segment at 12–40 is disordered; it reads FEDQPGSPESLATRDFSASGLSSRNGGGD. TPR repeat units lie at residues 32–65, 66–101, 135–168, 188–221, 307–340, 551–584, 585–618, 620–654, and 655–688; these read LSSR…SLNY, EEAR…TPRI, LEAI…VENA, QKAL…PWNL, GERW…SESR, TEAW…CYYS, PRGW…EPDH, PSIV…DPRN, and HDAW…ELSA.

In terms of assembly, interacts with calmodulin in a calcium-dependent manner. In terms of tissue distribution, expressed in pollen, flowers, fruits and leaves.

This is Protein NPGR1 from Arabidopsis thaliana (Mouse-ear cress).